We begin with the raw amino-acid sequence, 312 residues long: Ribonuclease Z (312 aa).

Zn(2+)-binding residues include H63, H65, D67, H68, H140, D211, and H269. D67 acts as the Proton acceptor in catalysis.

The protein belongs to the RNase Z family. In terms of assembly, homodimer. Zn(2+) serves as cofactor.

It catalyses the reaction Endonucleolytic cleavage of RNA, removing extra 3' nucleotides from tRNA precursor, generating 3' termini of tRNAs. A 3'-hydroxy group is left at the tRNA terminus and a 5'-phosphoryl group is left at the trailer molecule.. Its function is as follows. Zinc phosphodiesterase, which displays some tRNA 3'-processing endonuclease activity. Probably involved in tRNA maturation, by removing a 3'-trailer from precursor tRNA. This chain is Ribonuclease Z, found in Anoxybacillus flavithermus (strain DSM 21510 / WK1).